We begin with the raw amino-acid sequence, 38 residues long: Photosystem II reaction center protein X 2 (38 aa).

The helical transmembrane segment at 8–28 (FLWSLVYGAVVLGLLFGAIVF) threads the bilayer.

It belongs to the PsbX family. Type 1 subfamily. PSII is composed of 1 copy each of membrane proteins PsbA, PsbB, PsbC, PsbD, PsbE, PsbF, PsbH, PsbI, PsbJ, PsbK, PsbL, PsbM, PsbT, PsbX, PsbY, PsbZ, Psb30/Ycf12, peripheral proteins PsbO, CyanoQ (PsbQ), PsbU, PsbV and a large number of cofactors. It forms dimeric complexes.

It localises to the cellular thylakoid membrane. In terms of biological role, involved in the binding and/or turnover of quinones at the Q(B) site of photosystem II (PSII). PSII is a light-driven water plastoquinone oxidoreductase, using light energy to abstract electrons from H(2)O, generating a proton gradient subsequently used for ATP formation. This is Photosystem II reaction center protein X 2 from Synechococcus sp. (strain JA-3-3Ab) (Cyanobacteria bacterium Yellowstone A-Prime).